The following is a 521-amino-acid chain: GMP synthase [glutamine-hydrolyzing] (521 aa).

Positions 8-203 (KILILDFGAQ…VVDVCGCQTL (196 aa)) constitute a Glutamine amidotransferase type-1 domain. The active-site Nucleophile is the C85. Active-site residues include H177 and E179. One can recognise a GMPS ATP-PPase domain in the interval 204–396 (WTAANIIDDQ…LGLPRTMVYR (193 aa)). Residue 231–237 (SGGVDSS) participates in ATP binding.

As to quaternary structure, homodimer.

It carries out the reaction XMP + L-glutamine + ATP + H2O = GMP + L-glutamate + AMP + diphosphate + 2 H(+). It functions in the pathway purine metabolism; GMP biosynthesis; GMP from XMP (L-Gln route): step 1/1. Its function is as follows. Catalyzes the synthesis of GMP from XMP. This is GMP synthase [glutamine-hydrolyzing] from Stenotrophomonas maltophilia (strain K279a).